A 222-amino-acid polypeptide reads, in one-letter code: MKFFIDTANLDEIRAAESLGVLDGVTTNPSLIAKIVEDPASFTRKDFMDHIKRICEIVDGPVNAEVTTLDAASMVREGEELAAIHNNVVVKCPLTIDGLKAIRSLSEKGIRTNATLVFSPNQALLAAKAGAGYVSPFVGRLDDISTDGMALVGQIVEIYDNYGLMTEVIVASIRHPQHVVESALIGADIATIPYSVIRQLANHPLTDAGLKKFMEDAAVIKK.

Residue Lys-91 is the Schiff-base intermediate with substrate of the active site.

Belongs to the transaldolase family. Type 3B subfamily.

Its subcellular location is the cytoplasm. The enzyme catalyses D-sedoheptulose 7-phosphate + D-glyceraldehyde 3-phosphate = D-erythrose 4-phosphate + beta-D-fructose 6-phosphate. It functions in the pathway carbohydrate degradation; pentose phosphate pathway; D-glyceraldehyde 3-phosphate and beta-D-fructose 6-phosphate from D-ribose 5-phosphate and D-xylulose 5-phosphate (non-oxidative stage): step 2/3. Its function is as follows. Transaldolase is important for the balance of metabolites in the pentose-phosphate pathway. This is Probable transaldolase from Chlorobium luteolum (strain DSM 273 / BCRC 81028 / 2530) (Pelodictyon luteolum).